The primary structure comprises 196 residues: Putative manganese efflux pump MntP (196 aa).

6 consecutive transmembrane segments (helical) span residues 3 to 23, 39 to 59, 67 to 87, 109 to 129, 137 to 157, and 172 to 192; these read PASLILLAFAMSTDAFAASIG, IGAVFGVVEAIMPLLGWALGH, GVDHWIAFVMLALLGGHMIWA, IWLIAFTALATSIDAMAVGIT, IIAASVAIGLATALMVTLGTL, and ILGGLILIGIGIAVLYEHLAG.

It belongs to the MntP (TC 9.B.29) family.

The protein resides in the cell inner membrane. Functionally, probably functions as a manganese efflux pump. This Chromohalobacter salexigens (strain ATCC BAA-138 / DSM 3043 / CIP 106854 / NCIMB 13768 / 1H11) protein is Putative manganese efflux pump MntP.